We begin with the raw amino-acid sequence, 290 residues long: Appressoria-specific virulence factor GAS2 (290 aa).

A signal peptide spans 1 to 19 (MKYTSAILISAFAATNVFA). The N-linked (GlcNAc...) asparagine glycan is linked to Asn99. The interval 121–140 (LPRAGGGTSTPKGTEETGVK) is disordered.

The protein localises to the cytoplasm. In terms of biological role, appressoria-specific virulence factor required for appressorial penetration in host and lesion development. This is Appressoria-specific virulence factor GAS2 from Pyricularia oryzae (strain 70-15 / ATCC MYA-4617 / FGSC 8958) (Rice blast fungus).